Reading from the N-terminus, the 436-residue chain is GDP-mannose 6-dehydrogenase (436 aa).

6 residues coordinate NAD(+): Tyr-10, Val-11, Asp-30, Lys-35, Thr-86, and Thr-124. GDP-alpha-D-mannuronate-binding residues include Glu-161, Lys-210, Asn-214, His-217, Asn-225, Tyr-256, Tyr-257, Arg-259, and Gly-265. Cys-268 is an active-site residue. Residue Lys-271 coordinates NAD(+). Lys-324 provides a ligand contact to GDP-alpha-D-mannuronate. Arg-331 provides a ligand contact to NAD(+).

This sequence belongs to the UDP-glucose/GDP-mannose dehydrogenase family.

The enzyme catalyses GDP-alpha-D-mannose + 2 NAD(+) + H2O = GDP-alpha-D-mannuronate + 2 NADH + 3 H(+). The protein operates within glycan biosynthesis; alginate biosynthesis. Catalyzes the oxidation of guanosine diphospho-D-mannose (GDP-D-mannose) to GDP-D-mannuronic acid, a precursor for alginate polymerization. The alginate layer causes a mucoid phenotype and is essential for cyst formation. This is GDP-mannose 6-dehydrogenase (algD) from Azotobacter vinelandii.